The sequence spans 200 residues: 3-isopropylmalate dehydratase small subunit (200 aa).

This sequence belongs to the LeuD family. LeuD type 1 subfamily. As to quaternary structure, heterodimer of LeuC and LeuD.

The catalysed reaction is (2R,3S)-3-isopropylmalate = (2S)-2-isopropylmalate. The protein operates within amino-acid biosynthesis; L-leucine biosynthesis; L-leucine from 3-methyl-2-oxobutanoate: step 2/4. Catalyzes the isomerization between 2-isopropylmalate and 3-isopropylmalate, via the formation of 2-isopropylmaleate. This Campylobacter jejuni subsp. jejuni serotype O:6 (strain 81116 / NCTC 11828) protein is 3-isopropylmalate dehydratase small subunit.